Reading from the N-terminus, the 94-residue chain is Pyrimidine/purine nucleoside phosphorylase (94 aa).

The protein belongs to the nucleoside phosphorylase PpnP family.

It catalyses the reaction a purine D-ribonucleoside + phosphate = a purine nucleobase + alpha-D-ribose 1-phosphate. The enzyme catalyses adenosine + phosphate = alpha-D-ribose 1-phosphate + adenine. The catalysed reaction is cytidine + phosphate = cytosine + alpha-D-ribose 1-phosphate. It carries out the reaction guanosine + phosphate = alpha-D-ribose 1-phosphate + guanine. It catalyses the reaction inosine + phosphate = alpha-D-ribose 1-phosphate + hypoxanthine. The enzyme catalyses thymidine + phosphate = 2-deoxy-alpha-D-ribose 1-phosphate + thymine. The catalysed reaction is uridine + phosphate = alpha-D-ribose 1-phosphate + uracil. It carries out the reaction xanthosine + phosphate = alpha-D-ribose 1-phosphate + xanthine. In terms of biological role, catalyzes the phosphorolysis of diverse nucleosides, yielding D-ribose 1-phosphate and the respective free bases. Can use uridine, adenosine, guanosine, cytidine, thymidine, inosine and xanthosine as substrates. Also catalyzes the reverse reactions. The protein is Pyrimidine/purine nucleoside phosphorylase of Alcanivorax borkumensis (strain ATCC 700651 / DSM 11573 / NCIMB 13689 / SK2).